The following is a 103-amino-acid chain: Pyrimidine/purine nucleoside phosphorylase (103 aa).

It belongs to the nucleoside phosphorylase PpnP family.

It carries out the reaction a purine D-ribonucleoside + phosphate = a purine nucleobase + alpha-D-ribose 1-phosphate. It catalyses the reaction adenosine + phosphate = alpha-D-ribose 1-phosphate + adenine. The catalysed reaction is cytidine + phosphate = cytosine + alpha-D-ribose 1-phosphate. The enzyme catalyses guanosine + phosphate = alpha-D-ribose 1-phosphate + guanine. It carries out the reaction inosine + phosphate = alpha-D-ribose 1-phosphate + hypoxanthine. It catalyses the reaction thymidine + phosphate = 2-deoxy-alpha-D-ribose 1-phosphate + thymine. The catalysed reaction is uridine + phosphate = alpha-D-ribose 1-phosphate + uracil. The enzyme catalyses xanthosine + phosphate = alpha-D-ribose 1-phosphate + xanthine. In terms of biological role, catalyzes the phosphorolysis of diverse nucleosides, yielding D-ribose 1-phosphate and the respective free bases. Can use uridine, adenosine, guanosine, cytidine, thymidine, inosine and xanthosine as substrates. Also catalyzes the reverse reactions. This chain is Pyrimidine/purine nucleoside phosphorylase, found in Shewanella baltica (strain OS155 / ATCC BAA-1091).